The sequence spans 255 residues: FMR1 neighbor protein (255 aa).

Residues 1–68 lie on the Cytoplasmic side of the membrane; that stretch reads MSSHRRKAKG…ESLKMRVSKP (68 aa). A helical membrane pass occupies residues 69 to 89; sequence FGMLMLSIWILLFVCYYLSYY. The Extracellular portion of the chain corresponds to 90-183; sequence LCSGSSYFVL…FAPFRDVPKQ (94 aa). The 60-residue stretch at 125–184 folds into the P-type domain; that stretch reads LLNFFFPTTCNLRENQVAKPCNELQDLSESECLRHKCCFSSSGTTSFKCFAPFRDVPKQM. Residues 184–204 traverse the membrane as a helical segment; sequence MMQMFGLGAISLILVCLPIYC. Over 205–255 the chain is Cytoplasmic; it reads RSLFWRSEPADDLQRQDNRVVTGLKKQRRKRKRKSEMLQKAARGREEHGDE. A disordered region spans residues 220-255; the sequence is QDNRVVTGLKKQRRKRKRKSEMLQKAARGREEHGDE. Residues 229–238 show a composition bias toward basic residues; the sequence is KKQRRKRKRK.

In terms of tissue distribution, testis-specific. Expressed in melanoma, sarcoma, lung, breast, bladder, esophageal and ovarian cancers.

The protein resides in the membrane. The polypeptide is FMR1 neighbor protein (Homo sapiens (Human)).